We begin with the raw amino-acid sequence, 969 residues long: Liprin-beta-1 (969 aa).

The residue at position 37 (Ser-37) is a Phosphoserine. Residue Thr-39 is modified to Phosphothreonine. Residue Ser-40 is modified to Phosphoserine. A coiled-coil region spans residues 99 to 310 (GDVYQERLAR…CLSRYRKMQD (212 aa)). At Lys-291 the chain carries N6-acetyllysine. Disordered regions lie at residues 342-361 (DLER…RDLL), 381-407 (LLPP…FEEG), and 424-482 (GVST…RKAR). Low complexity predominate over residues 346–358 (STSSTPGMGSPSR). Phosphoserine is present on residues Ser-403 and Ser-435. The segment covering 426 to 438 (STSSLQKSSSLGN) has biased composition (low complexity). Basic and acidic residues predominate over residues 439–452 (LKKEASDGTDKAPT). Lys-440 is covalently cross-linked (Glycyl lysine isopeptide (Lys-Gly) (interchain with G-Cter in SUMO2)). Ser-500 is subject to Phosphoserine. Residues 518-529 (AGTSRSKGSQGT) show a composition bias toward polar residues. The disordered stretch occupies residues 518 to 593 (AGTSRSKGSQ…PRLGWSRDLG (76 aa)). Position 538 is a phosphoserine (Ser-538). Basic residues predominate over residues 543 to 557 (KKSRGIMRLFGKLRR). Ser-560 and Ser-595 each carry phosphoserine. 2 SAM domains span residues 606-670 (WTKE…LGSE) and 678-741 (LDFN…LRIN). Phosphoserine is present on residues Ser-753 and Ser-757. The 73-residue stretch at 763–835 (VQQWTNHRVM…ATHFNLLIGA (73 aa)) folds into the SAM 3 domain. Residues Ser-957, Ser-959, and Ser-961 each carry the phosphoserine modification. Thr-963 carries the post-translational modification Phosphothreonine.

The protein belongs to the liprin family. Liprin-beta subfamily. In terms of assembly, forms homodimers and heterodimers. Interacts with S100A4 in a Ca(2+)-dependent mode. Part of a cortical microtubule stabilization complex (CMSC) composed of KANK1, PPFIA1, PPFIBP1, ERC1/ELKS, PHLDB2/LL5beta, CLASPs, KIF21A and possibly additional interactors; within CMSCs KANK1 and PHLDB2/LL5beta seem to be the core components for recruiting microtubule-binding proteins KIF21A and CLASPs, whereas PPFIA1, PPFIBP1 and ERC1/ELKS serve as scaffolds for protein clustering. Interacts with KANK1 (via CC1 domain, residues 244-339).

The protein resides in the cytoplasm. It localises to the cell cortex. In terms of biological role, may regulate the disassembly of focal adhesions. Did not bind receptor-like tyrosine phosphatases type 2A. This chain is Liprin-beta-1 (Ppfibp1), found in Mus musculus (Mouse).